The primary structure comprises 240 residues: T4 protein (240 aa).

This sequence belongs to the poxviruses B9 family.

This chain is T4 protein, found in Sheeppox virus (strain InS-1) (SPPV).